A 202-amino-acid chain; its full sequence is MKSLQIICLLFIFVARGSCRSCEICHNVGNDCGYDYVEECHSPEDQCGKVLLEISSAPLSIRSSHRNCFSSSLCKLEHFDVNTGQETYLRGRIHCCDEKKCEGRPFPGLPLSHPNGYVCPGVLGLFSEDSSESEAACKGDETKCINIVGYRKERFPGDIAYNIKGCVSSCPELRLSNRTHEERRNDLIKVECRDAVKITPSE.

The signal sequence occupies residues 1–19; the sequence is MKSLQIICLLFIFVARGSC. 8 disulfide bridges follow: cysteine 22–cysteine 47, cysteine 25–cysteine 32, cysteine 40–cysteine 68, cysteine 74–cysteine 95, cysteine 96–cysteine 101, cysteine 119–cysteine 144, cysteine 137–cysteine 166, and cysteine 170–cysteine 192. Residue asparagine 177 is glycosylated (N-linked (GlcNAc...) asparagine).

It belongs to the CNF-like-inhibitor family. In terms of assembly, heterodimer of subunit A and subunit B. In terms of processing, N-glycosylated. In terms of tissue distribution, expressed by the liver. Not expressed in esophagus, stomach, pancreas, spleen, gall bladder, small intestine, rectum, kidney, trachea, lung, testis and body fat.

It is found in the secreted. In terms of biological role, inhibits the enzymatic activity of all phospholipase A2 (PA2) groups. In Elaphe quadrivirgata (Japanese four-lined ratsnake), this protein is Phospholipase A2 inhibitor gamma subunit A.